The chain runs to 43 residues: Defensin (43 aa).

Intrachain disulfides connect cysteine 3-cysteine 34, cysteine 20-cysteine 39, and cysteine 24-cysteine 41.

The protein resides in the secreted. In terms of biological role, antibacterial peptide. Affects Gram-negative bacteria including methicillin-resistant Staphylococcus aureus. This Trypoxylus dichotomus (Japanese rhinoceros beetle) protein is Defensin.